A 453-amino-acid chain; its full sequence is Probable glycine dehydrogenase (decarboxylating) subunit 1 (453 aa).

The protein belongs to the GcvP family. N-terminal subunit subfamily. The glycine cleavage system is composed of four proteins: P, T, L and H. In this organism, the P 'protein' is a heterodimer of two subunits.

It catalyses the reaction N(6)-[(R)-lipoyl]-L-lysyl-[glycine-cleavage complex H protein] + glycine + H(+) = N(6)-[(R)-S(8)-aminomethyldihydrolipoyl]-L-lysyl-[glycine-cleavage complex H protein] + CO2. Functionally, the glycine cleavage system catalyzes the degradation of glycine. The P protein binds the alpha-amino group of glycine through its pyridoxal phosphate cofactor; CO(2) is released and the remaining methylamine moiety is then transferred to the lipoamide cofactor of the H protein. This is Probable glycine dehydrogenase (decarboxylating) subunit 1 from Caulobacter sp. (strain K31).